The chain runs to 140 residues: Sex-regulated protein janus-B (140 aa).

Arginine 42 contacts substrate. The active-site Proton acceptor is histidine 69. 110–112 (SRT) contacts substrate.

This sequence belongs to the janus family. As to expression, germline cells of adult males.

In terms of biological role, janA and janB regulate somatic sex differentiation. The chain is Sex-regulated protein janus-B (janB) from Drosophila melanogaster (Fruit fly).